Here is a 283-residue protein sequence, read N- to C-terminus: Phospholipase C (283 aa).

The N-terminal stretch at 1 to 24 (MKKKVLALGAAITLVAPLQSVAFA) is a signal peptide. Positions 25 to 38 (HENDGGQRFGVIPR) are excised as a propeptide. Positions 39, 52, 93, 107, 156, 160, 166, 180, and 184 each coordinate Zn(2+). The 245-residue stretch at 39–283 (WSAEDKHKEG…QLWFDTYGNR (245 aa)) folds into the Zn-dependent PLC domain.

This sequence belongs to the bacterial zinc-metallophospholipase C family. As to quaternary structure, monomer. The cofactor is Zn(2+).

It catalyses the reaction a 1,2-diacyl-sn-glycero-3-phosphocholine + H2O = phosphocholine + a 1,2-diacyl-sn-glycerol + H(+). Its function is as follows. Required, with sphingomyelinase, to effect target cell lysis (hemolysis). In Bacillus cereus, this protein is Phospholipase C (cerA).